The chain runs to 328 residues: Tetraacyldisaccharide 4'-kinase (328 aa).

55–62 (TAGGNGKT) contributes to the ATP binding site.

This sequence belongs to the LpxK family.

The enzyme catalyses a lipid A disaccharide + ATP = a lipid IVA + ADP + H(+). Its pathway is glycolipid biosynthesis; lipid IV(A) biosynthesis; lipid IV(A) from (3R)-3-hydroxytetradecanoyl-[acyl-carrier-protein] and UDP-N-acetyl-alpha-D-glucosamine: step 6/6. Transfers the gamma-phosphate of ATP to the 4'-position of a tetraacyldisaccharide 1-phosphate intermediate (termed DS-1-P) to form tetraacyldisaccharide 1,4'-bis-phosphate (lipid IVA). The polypeptide is Tetraacyldisaccharide 4'-kinase (Escherichia coli (strain K12 / MC4100 / BW2952)).